A 30-amino-acid polypeptide reads, in one-letter code: uncharacterized protein (30 aa).

The helical transmembrane segment at 9–26 threads the bilayer; it reads YRLVIIVLISVYYRYRFF.

It localises to the plastid. The protein resides in the chloroplast membrane. This is an uncharacterized protein from Marchantia polymorpha (Common liverwort).